The sequence spans 642 residues: Capsid vertex component 2 (642 aa).

The tract at residues 1 to 48 (MSLLHTFWRLPVAVFFEPHEENVLRCPERVLRRLLEDAAVTMRGGGWR) is interaction with major capsid protein/MCP. The tract at residues 97–125 (DEGPSPRTLLQPPCRPRSSSPGTGVAGAS) is disordered.

It belongs to the herpesviridae CVC2 protein family. As to quaternary structure, heterodimerizes with CVC1. Interacts with major capsid protein/MCP and triplex capsid protein 1/TRX1 at the pentamer vertices. Interacts with the large tegument protein/LTP.

It localises to the virion. It is found in the host nucleus. In terms of biological role, capsid vertex-specific component that plays a role during viral DNA encapsidation, assuring correct genome cleavage and presumably stabilizing capsids that contain full-length viral genomes. Participates in the interaction between the capsid and the tegument through interaction with the large tegument protein/LTP. This is Capsid vertex component 2 from Homo sapiens (Human).